Reading from the N-terminus, the 536-residue chain is Xylulose kinase (536 aa).

Substrate is bound by residues H99, R170, D280, and N281. ATP-binding positions include W355, 441-442, and N445; that span reads GA.

The protein belongs to the FGGY kinase family. Monomer.

It catalyses the reaction D-xylulose + ATP = D-xylulose 5-phosphate + ADP + H(+). Its function is as follows. Phosphorylates D-xylulose to produce D-xylulose 5-phosphate, a molecule that may play an important role in the regulation of glucose metabolism and lipogenesis. The sequence is that of Xylulose kinase (XYLB) from Homo sapiens (Human).